We begin with the raw amino-acid sequence, 810 residues long: Zinc finger CCCH domain-containing protein 11A (810 aa).

3 C3H1-type zinc fingers span residues 2–29, 31–57, and 60–86; these read PNQG…HCEA, IGNE…HMEI, and KRSE…HHNR. Phosphoserine is present on Ser108. Glycyl lysine isopeptide (Lys-Gly) (interchain with G-Cter in SUMO2) cross-links involve residues Lys114 and Lys124. A Phosphoserine modification is found at Ser132. Disordered regions lie at residues 139 to 194, 223 to 258, 285 to 351, and 367 to 432; these read MKVE…GLRV, KKMK…ENVR, GKRK…DKVN, and ERAS…TTCI. Residue Lys140 forms a Glycyl lysine isopeptide (Lys-Gly) (interchain with G-Cter in SUMO2) linkage. Ser149 and Ser171 each carry phosphoserine. Residues 160–175 show a composition bias toward acidic residues; the sequence is ADDDEDDDDQFSEEGD. Ser290 carries the post-translational modification Phosphoserine. Basic and acidic residues-rich tracts occupy residues 309-322 and 367-390; these read KKVE…DKTP and ERAS…KTDD. Residue Thr321 is modified to Phosphothreonine. Residues 362-423 are a coiled coil; it reads EEILLERASQ…KHRQQEAERQ (62 aa). The residue at position 370 (Ser370) is a Phosphoserine. Residues 391–402 show a composition bias toward polar residues; it reads STSGARSSSTIR. The segment covering 417 to 432 has biased composition (basic and acidic residues); it reads QQEAERQKSKKDTTCI. Lys478 participates in a covalent cross-link: Glycyl lysine isopeptide (Lys-Gly) (interchain with G-Cter in SUMO2). The tract at residues 482-549 is disordered; sequence ALRVQQSSES…KEASGETTGV (68 aa). Residues 486–498 show a composition bias toward low complexity; that stretch reads QQSSESSTSSPSQ. Residue Lys619 forms a Glycyl lysine isopeptide (Lys-Gly) (interchain with G-Cter in SUMO2) linkage. Residues 715–768 form a disordered region; it reads TVPEAENPRDSLVLPPTQSSSDSSPPEVSGPSSSQMSMKTRRLSSASTGKPPLS. Over residues 729-748 the composition is skewed to low complexity; the sequence is PPTQSSSDSSPPEVSGPSSS. Residues 749 to 762 are compositionally biased toward polar residues; that stretch reads QMSMKTRRLSSAST.

As to quaternary structure, interacts with TREX complex components THOC2, DDX39 and POLDIP3; the interactions are ATP-dependent. Interacts with PABPN1; this interaction retains ZC3H11A in nuclear speckles. Interacts with KPNA3.

Its subcellular location is the nucleus. It is found in the nucleus speckle. Its function is as follows. Through its association with TREX complex components, may participate in the export and post-transcriptional coordination of selected mRNA transcripts, including those required to maintain the metabolic processes in embryonic cells. Binds RNA. Functionally, (Microbial infection) Plays a role in efficient growth of several nuclear-replicating viruses such as HIV-1, influenza virus or herpes simplex virus 1/HHV-1. Required for efficient viral mRNA export. May be required for proper polyadenylation of adenovirus type 5/HAdV-5 capsid mRNA. In Homo sapiens (Human), this protein is Zinc finger CCCH domain-containing protein 11A (ZC3H11A).